The chain runs to 240 residues: Ribosomal RNA large subunit methyltransferase E (240 aa).

Over residues 1–20 the composition is skewed to gly residues; sequence MSKAGGNKGGSRTGGRGGAG. The tract at residues 1–33 is disordered; the sequence is MSKAGGNKGGSRTGGRGGAGSSNLHVRVKKKAG. S-adenosyl-L-methionine is bound by residues G92, W94, D115, D131, and D155. K195 (proton acceptor) is an active-site residue.

The protein belongs to the class I-like SAM-binding methyltransferase superfamily. RNA methyltransferase RlmE family.

It localises to the cytoplasm. The catalysed reaction is uridine(2552) in 23S rRNA + S-adenosyl-L-methionine = 2'-O-methyluridine(2552) in 23S rRNA + S-adenosyl-L-homocysteine + H(+). In terms of biological role, specifically methylates the uridine in position 2552 of 23S rRNA at the 2'-O position of the ribose in the fully assembled 50S ribosomal subunit. The sequence is that of Ribosomal RNA large subunit methyltransferase E from Brucella abortus (strain S19).